The chain runs to 190 residues: Xanthine phosphoribosyltransferase (190 aa).

Xanthine contacts are provided by L20 and N27. 128–132 (ANGKA) serves as a coordination point for 5-phospho-alpha-D-ribose 1-diphosphate. Residue K156 participates in xanthine binding.

This sequence belongs to the purine/pyrimidine phosphoribosyltransferase family. Xpt subfamily. Homodimer.

Its subcellular location is the cytoplasm. It catalyses the reaction XMP + diphosphate = xanthine + 5-phospho-alpha-D-ribose 1-diphosphate. Its pathway is purine metabolism; XMP biosynthesis via salvage pathway; XMP from xanthine: step 1/1. Its function is as follows. Converts the preformed base xanthine, a product of nucleic acid breakdown, to xanthosine 5'-monophosphate (XMP), so it can be reused for RNA or DNA synthesis. This is Xanthine phosphoribosyltransferase from Pseudomonas fluorescens (strain Pf0-1).